We begin with the raw amino-acid sequence, 732 residues long: TIR domain-containing adapter molecule 1 (732 aa).

Positions 1-153 (MDNPGPSLRG…CSSDIKGDPS (153 aa)) are TRIF-NTD. The TRAF6-binding signature appears at 84–91 (EGPEEPPD). The segment at 144-191 (CSSDIKGDPSGFQPLHSHQGSLQPPSASPAVTRSQPRPIDTPDWSWGH) is disordered. Over residues 159–178 (HSHQGSLQPPSASPAVTRSQ) the composition is skewed to polar residues. Residues 206 to 209 (LEIS) carry the pLxIS motif motif. The residue at position 209 (S209) is a Phosphoserine. Residue K228 forms a Glycyl lysine isopeptide (Lys-Gly) (interchain with G-Cter in ubiquitin) linkage. 2 short sequence motifs (TRAF6-binding) span residues 247 to 254 (QEPEEISW) and 296 to 306 (HCPIECTELST). Polar residues predominate over residues 305–331 (STNSRSPLTSTTESVGKQWPITSQRSP). Residues 305–389 (STNSRSPLTS…TSTSPVLDHS (85 aa)) form a disordered region. Positions 345 to 359 (SSSPPAQPPSLQASP) are enriched in low complexity. In terms of domain architecture, TIR spans 395–534 (KFYNFVVIHA…KVANTFKTQK (140 aa)). The interval 514 to 713 (WLDEHSPIFA…SSDDKTECSE (200 aa)) is sufficient to induce apoptosis. 2 disordered regions span residues 603–679 (TPSW…GPQP) and 696–732 (MWGHTGAQSSDDKTECSENPCMGPLTDQGEPLLETPE). Composition is skewed to pro residues over residues 604 to 615 (PSWPGCPQPIPS) and 625 to 657 (PYSPQPPSFPQPPCFPQPPSFPQPPSFPLPPVS). The segment covering 658–671 (SPQSQSFPSASSPA) has biased composition (low complexity).

In terms of assembly, homodimer. Found in a multi-helicase-TICAM1 complex at least composed of DHX36, DDX1, DDX21 and TICAM1; this complex exists in resting cells with or without poly(I:C) RNA ligand stimulation. Interacts (via TIR domain) with DDX21 (via C-terminus). Interacts (via TIR domain) with DHX36 (via C-terminus). Interacts with AZI2 and IRF7. Interacts (when phosphorylated) with IRF3; following activation and phosphorylation on the pLxIS motif by TBK1, recruits IRF3. Interacts with TICAM2 in TLR4 recruitment. Interaction with PIAS4 inhibits the TICAM1-induced NF-kappa-B, IRF and IFNB1 activation. Interacts with IKBKB and IKBKE. Interaction with SARM1 blocks TICAM1-dependent transcription factor activation. Interacts with TRAF3. Interacts with TRAFD1. Interacts with UBQLN1 (via UBA domain). Interacts with TBK1, TRAF6 and RIPK1 and these interactions are enhanced in the presence of WDFY1. Interacts (via the TIR domain) with TLR3 in response to poly(I:C) and this interaction is enhanced in the presence of WDFY1. Interacts with TLR4 in response to poly(I:C) in a WDFY1-dependent manner. Interacts with WDFY1 in response to poly(I:C). Interacts with TRIM56. Interacts (via the TIR domain) with TLR5. Interacts with TRIM8. Interacts with TAX1BP1 and TRIM32; these interactions target TICAM1 to TAX1BP1-mediated selective autophagic degradation. Interacts with DDX50. In terms of processing, phosphorylated by TBK1. Following activation, phosphorylated by TBK1 at Ser-209 in the pLxIS motif. The phosphorylated pLxIS motif constitutes an IRF3-binding motif, leading to recruitment of the transcription factor IRF3 to induce type-I interferons and other cytokines. Polyubiquitinated at Lys-228 by TRIM38 with 'Lys-48'-linked chains, leading to proteasomal degradation. Polyubiquitinated with 'Lys-6'- and 'Lys-33'-linked chains in a TRIM8-dependent manner; ubiquitination disrupts the interaction with TBK1 and subsequent interferon production.

The protein resides in the cytoplasm. The protein localises to the cytosol. It localises to the cytoplasmic vesicle. Its subcellular location is the autophagosome. It is found in the mitochondrion. Functionally, involved in innate immunity against invading pathogens. Adapter used by TLR3, TLR4 (through TICAM2) and TLR5 to mediate NF-kappa-B and interferon-regulatory factor (IRF) activation, and to induce apoptosis. Ligand binding to these receptors results in TRIF recruitment through its TIR domain. Distinct protein-interaction motifs allow recruitment of the effector proteins TBK1, TRAF6 and RIPK1, which in turn, lead to the activation of transcription factors IRF3 and IRF7, NF-kappa-B and FADD respectively. Phosphorylation by TBK1 on the pLxIS motif leads to recruitment and subsequent activation of the transcription factor IRF3 to induce expression of type I interferon and exert a potent immunity against invading pathogens. Component of a multi-helicase-TICAM1 complex that acts as a cytoplasmic sensor of viral double-stranded RNA (dsRNA) and plays a role in the activation of a cascade of antiviral responses including the induction of pro-inflammatory cytokines. The chain is TIR domain-containing adapter molecule 1 (Ticam1) from Mus musculus (Mouse).